The primary structure comprises 191 residues: Pyridoxal 5'-phosphate synthase subunit PdxT (191 aa).

46 to 48 (GES) provides a ligand contact to L-glutamine. The active-site Nucleophile is C78. Residues R105 and 133–134 (IR) contribute to the L-glutamine site. Active-site charge relay system residues include H169 and E171.

Belongs to the glutaminase PdxT/SNO family. As to quaternary structure, in the presence of PdxS, forms a dodecamer of heterodimers. Only shows activity in the heterodimer.

It carries out the reaction aldehydo-D-ribose 5-phosphate + D-glyceraldehyde 3-phosphate + L-glutamine = pyridoxal 5'-phosphate + L-glutamate + phosphate + 3 H2O + H(+). The enzyme catalyses L-glutamine + H2O = L-glutamate + NH4(+). Its pathway is cofactor biosynthesis; pyridoxal 5'-phosphate biosynthesis. In terms of biological role, catalyzes the hydrolysis of glutamine to glutamate and ammonia as part of the biosynthesis of pyridoxal 5'-phosphate. The resulting ammonia molecule is channeled to the active site of PdxS. This chain is Pyridoxal 5'-phosphate synthase subunit PdxT, found in Brevibacillus brevis (strain 47 / JCM 6285 / NBRC 100599).